The following is a 308-amino-acid chain: Ycf92-like protein (308 aa).

Transmembrane regions (helical) follow at residues 41-61 (FANN…TLIA), 75-95 (LLTL…GLGV), 153-173 (ISTI…TTAP), 192-212 (IPVT…PLVL), and 288-308 (WLAI…GNQI).

It belongs to the ycf92 family.

The protein localises to the membrane. This Nostoc sp. (strain PCC 7120 / SAG 25.82 / UTEX 2576) protein is Ycf92-like protein.